A 516-amino-acid chain; its full sequence is Acetylcholine receptor subunit delta (516 aa).

The first 21 residues, 1–21 (MEGSVLTLVLLAALVVCGSWG), serve as a signal peptide directing secretion. The Extracellular segment spans residues 22-244 (LNEEERLIRH…VTFYLIIRRK (223 aa)). Asn-96 and Asn-163 each carry an N-linked (GlcNAc...) asparagine glycan. Cys-150 and Cys-164 form a disulfide bridge. 3 helical membrane passes run 245–269 (PLFYVINILVPCVLISFMINLVFYL), 279–296 (MAISVLLAQSVFLLLISK), and 311–332 (FLLFGMVLVTMVVVICVIVLNI). The Cytoplasmic segment spans residues 333-470 (HFRTPSTHVL…WNRVARTVDR (138 aa)). Tyr-389 bears the Phosphotyrosine; by Tyr-kinases mark. Residues 471-493 (LCLFVVTPIMVVGTAWIFLQGAY) form a helical membrane-spanning segment.

It belongs to the ligand-gated ion channel (TC 1.A.9) family. Acetylcholine receptor (TC 1.A.9.1) subfamily. Delta/CHRND sub-subfamily. Pentamer of two alpha chains, and one each of the beta, delta, and gamma (in immature muscle) or epsilon (in mature muscle) chains. The muscle heteropentamer composed of alpha-1, beta-1, delta, epsilon subunits interacts with the alpha-conotoxin ImII.

It localises to the postsynaptic cell membrane. The protein localises to the cell membrane. It catalyses the reaction K(+)(in) = K(+)(out). It carries out the reaction Na(+)(in) = Na(+)(out). Functionally, after binding acetylcholine, the AChR responds by an extensive change in conformation that affects all subunits and leads to opening of an ion-conducting channel across the plasma membrane. This Bos taurus (Bovine) protein is Acetylcholine receptor subunit delta (CHRND).